Reading from the N-terminus, the 888-residue chain is Villin-like protein quail (888 aa).

One copy of the Gelsolin-like repeat lies at Gly307–Lys366. The HP domain maps to Phe823 to Phe888.

Belongs to the villin/gelsolin family. Germline specific in adult flies.

Its function is as follows. Required for the formation of cytoplasmic actin filament bundles in nurse cells, possibly by regulating both the polymerization and organization of actin filaments. Mutations in quail result in female sterility due to the disruption of cytoplasmic transport from the nurse cells into the oocyte late in oogenesis. This is Villin-like protein quail (qua) from Drosophila melanogaster (Fruit fly).